Reading from the N-terminus, the 54-residue chain is UPF0391 membrane protein Daro_2080 (54 aa).

2 helical membrane-spanning segments follow: residues 5–25 and 30–50; these read AIVF…GIAA and IAKI…VMGF.

This sequence belongs to the UPF0391 family.

It localises to the cell membrane. In Dechloromonas aromatica (strain RCB), this protein is UPF0391 membrane protein Daro_2080.